Consider the following 241-residue polypeptide: Pre-rRNA-processing protein pno1 (241 aa).

The disordered stretch occupies residues 48-71 (APAKTSAEKKRGAKPQMRRVPIPP). Threonine 52 bears the Phosphothreonine mark. Residues 162–214 (GDHLSRAIGRIAGQGGKTKFAIENASRTRIVLADSKIHILGGFTNIRIAKDAV) enclose the KH domain.

This sequence belongs to the PNO1 family. In terms of assembly, component of the small ribosomal subunit, ribosomal RNA processing complex (SSU RRP complex).

The protein localises to the cytoplasm. Its subcellular location is the nucleus. It localises to the nucleolus. Required for small ribosomal subunit (SSU) synthesis. Has a role in the processing of early nucleolar and late cytoplasmic pre-RNA species. This Schizosaccharomyces pombe (strain 972 / ATCC 24843) (Fission yeast) protein is Pre-rRNA-processing protein pno1 (rbp28).